Reading from the N-terminus, the 331-residue chain is Protoheme IX farnesyltransferase (331 aa).

The next 9 helical transmembrane spans lie at 22–42 (LVKP…MWMA), 50–70 (FGVT…INMV), 100–120 (FAGI…NLLA), 147–167 (IVIG…AATG), 174–194 (WVMF…LAIL), 220–240 (ILLY…PLHV), 241–261 (LGSF…WKAV), 273–293 (ATSL…AMGL), and 307–327 (LASL…LGAM).

The protein belongs to the UbiA prenyltransferase family. Protoheme IX farnesyltransferase subfamily.

Its subcellular location is the cell inner membrane. The catalysed reaction is heme b + (2E,6E)-farnesyl diphosphate + H2O = Fe(II)-heme o + diphosphate. It functions in the pathway porphyrin-containing compound metabolism; heme O biosynthesis; heme O from protoheme: step 1/1. Functionally, converts heme B (protoheme IX) to heme O by substitution of the vinyl group on carbon 2 of heme B porphyrin ring with a hydroxyethyl farnesyl side group. The protein is Protoheme IX farnesyltransferase of Synechococcus sp. (strain JA-3-3Ab) (Cyanobacteria bacterium Yellowstone A-Prime).